The primary structure comprises 787 residues: Patatin-like phospholipase domain-containing protein OOU_Y34scaffold00095g16.3 (787 aa).

Disordered regions lie at residues 47–69 (APDT…ARSF) and 137–164 (KVVG…PGRR). A compositionally biased stretch (low complexity) spans 59 to 69 (ASPRSPSARSF). Basic residues predominate over residues 144-157 (HRQKKSSRRRKRSK). A helical membrane pass occupies residues 180-200 (WPFLLIVGAWIVGLAVTYLFT). The region spanning 375–566 (LCLSGGASFA…RTDIPIRALN (192 aa)) is the PNPLA domain. A GXSXG motif is present at residues 406–410 (GTSGG). Ser408 acts as the Nucleophile in catalysis. Residue Asp553 is the Proton acceptor of the active site. Residues 745-787 (GTDEEITTNDEMEFASDEKAVLTEDEGQFDGVTDNTEGSPLLK) form a disordered region. The segment covering 746–759 (TDEEITTNDEMEFA) has biased composition (acidic residues). Positions 777–787 (TDNTEGSPLLK) are enriched in polar residues.

It belongs to the PLPL family.

It is found in the membrane. Probable lipid hydrolase. This is Patatin-like phospholipase domain-containing protein OOU_Y34scaffold00095g16.3 from Pyricularia oryzae (strain Y34) (Rice blast fungus).